The primary structure comprises 150 residues: MQLTSQAFSYGRPIPKKYSCQGVGISPPLSFSDIPSEAKSLALIVEDPDVPANVREDGLWIHWIVYNLSPIVSNLAEGAQIFAVQGINTAGEIGYCPPCPPDAKHRYYFYAYALDVVLPEEEGVTKEQLLEAMEGHILATAELMGTYEQD.

It belongs to the UPF0098 family.

The sequence is that of UPF0098 protein TC_0109 from Chlamydia muridarum (strain MoPn / Nigg).